The following is a 313-amino-acid chain: GTP cyclohydrolase MptA (313 aa).

The protein belongs to the GTP cyclohydrolase IV family. As to quaternary structure, homodimer. The cofactor is Fe(2+).

The enzyme catalyses GTP + H2O = 7,8-dihydroneopterin 2',3'-cyclic phosphate + formate + diphosphate + H(+). It functions in the pathway cofactor biosynthesis; 5,6,7,8-tetrahydromethanopterin biosynthesis. In terms of biological role, converts GTP to 7,8-dihydro-D-neopterin 2',3'-cyclic phosphate, the first intermediate in the biosynthesis of coenzyme methanopterin. This chain is GTP cyclohydrolase MptA, found in Methanoculleus marisnigri (strain ATCC 35101 / DSM 1498 / JR1).